Reading from the N-terminus, the 435-residue chain is Glutamate-1-semialdehyde 2,1-aminomutase (435 aa).

Residue Lys266 is modified to N6-(pyridoxal phosphate)lysine.

The protein belongs to the class-III pyridoxal-phosphate-dependent aminotransferase family. HemL subfamily. In terms of assembly, homodimer. Pyridoxal 5'-phosphate serves as cofactor.

It is found in the cytoplasm. The catalysed reaction is (S)-4-amino-5-oxopentanoate = 5-aminolevulinate. Its pathway is porphyrin-containing compound metabolism; protoporphyrin-IX biosynthesis; 5-aminolevulinate from L-glutamyl-tRNA(Glu): step 2/2. The sequence is that of Glutamate-1-semialdehyde 2,1-aminomutase from Coxiella burnetii (strain RSA 331 / Henzerling II).